The primary structure comprises 333 residues: Taste receptor type 2 member 38 (333 aa).

Topologically, residues 1–17 (MLTLTHICTVSYEVRST) are extracellular. Residues 18-38 (FLFISVLEFAVGFLTNAFISL) traverse the membrane as a helical segment. Topologically, residues 39 to 55 (VNFWDVVKRQPLSNSDC) are cytoplasmic. A helical transmembrane segment spans residues 56 to 76 (VLLCLSISRLFLHGLLFLSAI). The Extracellular portion of the chain corresponds to 77 to 94 (QLTHFQKLSEPLNHSYQV). Residues 95 to 115 (ILMLWMIANQANLWLAACLSL) traverse the membrane as a helical segment. Over 116-142 (LYCSKLIRFSHTFLICLASWVSRKISQ) the chain is Cytoplasmic. A helical transmembrane segment spans residues 143 to 163 (MLLGIILCSCICTVLCVWCFF). Topologically, residues 164-190 (GRLHFTVTTVLFMNNNTRLNWQIKDLN) are extracellular. A glycan (N-linked (GlcNAc...) asparagine) is linked at Asn178. A helical membrane pass occupies residues 191–211 (LFYSFLFCYLWSVPPFLLFLV). The Cytoplasmic portion of the chain corresponds to 212-251 (SSGMLTVSLGRHMRTMKVYTRDSRDPSLEAHIKALKSLVS). A helical transmembrane segment spans residues 252-272 (FFCFFVISSCAAFISVPLLIL). The Extracellular segment spans residues 273-276 (WHDK). Residues 277 to 297 (IGVMVCVGIMAACPSGHAAVL) form a helical membrane-spanning segment. At 298–333 (ISGNAKLRRAVTTILLWAQSSLKVRADHMADSRTLC) the chain is on the cytoplasmic side.

Belongs to the G-protein coupled receptor T2R family.

The protein resides in the membrane. Functionally, receptor that may play a role in the perception of bitterness and is gustducin-linked. May play a role in sensing the chemical composition of the gastrointestinal content. The activity of this receptor may stimulate alpha gustducin, mediate PLC-beta-2 activation and lead to the gating of TRPM5. The sequence is that of Taste receptor type 2 member 38 (TAS2R38) from Papio hamadryas (Hamadryas baboon).